A 417-amino-acid polypeptide reads, in one-letter code: CinA-like protein (417 aa).

It belongs to the CinA family.

This Leptospira biflexa serovar Patoc (strain Patoc 1 / Ames) protein is CinA-like protein.